A 251-amino-acid chain; its full sequence is Sugar fermentation stimulation protein homolog (251 aa).

Belongs to the SfsA family.

The polypeptide is Sugar fermentation stimulation protein homolog (Prochlorococcus marinus (strain MIT 9313)).